The primary structure comprises 282 residues: Pantothenate synthetase (282 aa).

31-38 lines the ATP pocket; that stretch reads MGALHDGH. Catalysis depends on His-38, which acts as the Proton donor. Gln-62 is a binding site for (R)-pantoate. Gln-62 provides a ligand contact to beta-alanine. 148–151 serves as a coordination point for ATP; the sequence is GKKD. Position 154 (Gln-154) interacts with (R)-pantoate. ATP is bound by residues Val-177 and 185–188; that span reads KSSR.

The protein belongs to the pantothenate synthetase family. In terms of assembly, homodimer.

The protein resides in the cytoplasm. The enzyme catalyses (R)-pantoate + beta-alanine + ATP = (R)-pantothenate + AMP + diphosphate + H(+). It participates in cofactor biosynthesis; (R)-pantothenate biosynthesis; (R)-pantothenate from (R)-pantoate and beta-alanine: step 1/1. In terms of biological role, catalyzes the condensation of pantoate with beta-alanine in an ATP-dependent reaction via a pantoyl-adenylate intermediate. The polypeptide is Pantothenate synthetase (Staphylococcus saprophyticus subsp. saprophyticus (strain ATCC 15305 / DSM 20229 / NCIMB 8711 / NCTC 7292 / S-41)).